Here is a 361-residue protein sequence, read N- to C-terminus: 3-dehydroquinate synthase (361 aa).

NAD(+) contacts are provided by residues 107-111, 131-132, Lys144, and Lys153; these read GVIGD and TS. Residues Glu186, His251, and His268 each contribute to the Zn(2+) site.

It belongs to the sugar phosphate cyclases superfamily. Dehydroquinate synthase family. It depends on NAD(+) as a cofactor. Co(2+) serves as cofactor. Requires Zn(2+) as cofactor.

It is found in the cytoplasm. The enzyme catalyses 7-phospho-2-dehydro-3-deoxy-D-arabino-heptonate = 3-dehydroquinate + phosphate. It participates in metabolic intermediate biosynthesis; chorismate biosynthesis; chorismate from D-erythrose 4-phosphate and phosphoenolpyruvate: step 2/7. Its function is as follows. Catalyzes the conversion of 3-deoxy-D-arabino-heptulosonate 7-phosphate (DAHP) to dehydroquinate (DHQ). This Synechocystis sp. (strain ATCC 27184 / PCC 6803 / Kazusa) protein is 3-dehydroquinate synthase.